The following is a 130-amino-acid chain: Holo-[acyl-carrier-protein] synthase (130 aa).

2 residues coordinate Mg(2+): Asp-9 and Glu-58.

It belongs to the P-Pant transferase superfamily. AcpS family. Mg(2+) is required as a cofactor.

It localises to the cytoplasm. The catalysed reaction is apo-[ACP] + CoA = holo-[ACP] + adenosine 3',5'-bisphosphate + H(+). Transfers the 4'-phosphopantetheine moiety from coenzyme A to a Ser of acyl-carrier-protein. In Mycolicibacterium paratuberculosis (strain ATCC BAA-968 / K-10) (Mycobacterium paratuberculosis), this protein is Holo-[acyl-carrier-protein] synthase.